The following is a 96-amino-acid chain: Protein RnfH (96 aa).

Belongs to the UPF0125 (RnfH) family.

This is Protein RnfH from Escherichia coli O139:H28 (strain E24377A / ETEC).